The following is a 101-amino-acid chain: Small ribosomal subunit protein uS14 (101 aa).

It belongs to the universal ribosomal protein uS14 family. Part of the 30S ribosomal subunit. Contacts proteins S3 and S10.

Binds 16S rRNA, required for the assembly of 30S particles and may also be responsible for determining the conformation of the 16S rRNA at the A site. This Bartonella henselae (strain ATCC 49882 / DSM 28221 / CCUG 30454 / Houston 1) (Rochalimaea henselae) protein is Small ribosomal subunit protein uS14.